We begin with the raw amino-acid sequence, 193 residues long: Orotate phosphoribosyltransferase (193 aa).

5-phospho-alpha-D-ribose 1-diphosphate contacts are provided by residues R85, K89, H91, and 111 to 119 (DDVLTTGKS). 2 residues coordinate orotate: T115 and R143.

This sequence belongs to the purine/pyrimidine phosphoribosyltransferase family. PyrE subfamily. Homodimer. Requires Mg(2+) as cofactor.

It catalyses the reaction orotidine 5'-phosphate + diphosphate = orotate + 5-phospho-alpha-D-ribose 1-diphosphate. The protein operates within pyrimidine metabolism; UMP biosynthesis via de novo pathway; UMP from orotate: step 1/2. Its function is as follows. Catalyzes the transfer of a ribosyl phosphate group from 5-phosphoribose 1-diphosphate to orotate, leading to the formation of orotidine monophosphate (OMP). This chain is Orotate phosphoribosyltransferase, found in Pyrobaculum islandicum (strain DSM 4184 / JCM 9189 / GEO3).